Consider the following 402-residue polypeptide: MPKKTVANLTEADLAGKRVLVRVDFNVPMDKATGAISDDTRIRAALPTIEDLIKKGAKVILCSHMGRPDGQVKENLRLTPVAKRLSELLGQEVIMCPDCIGEGVTAAISQMSNGQVALLENLRFHGEEEANDPDFAKKLAANADLYVNDAFGTAHRAHASTEGVTHYLSPSVAGYLIEKELNYLQAAIETPQRPLAAIIGGSKVSSKIGVIETLLEKCDKLLIGGGMIFTFYKARGLSVGKSLVEEDKLELAKSLEAKAKEKGVEFLLPTDVVLADKFDKDAESQIVKVENIPDGWMGLDIGPESVKVFQEALSNCKSVLWNGPMGVFEFDKFAAGTDAIAHTLADLTATGTTTIIGGGDSVAAVEKVGVAEKMSHISTGGGASLELLEGKVLPGIAALDEA.

Substrate-binding positions include 24–26 (DFN), arginine 41, 64–67 (HMGR), arginine 123, and arginine 156. Residues lysine 207, glycine 298, glutamate 329, and 358–361 (GGDS) each bind ATP.

It belongs to the phosphoglycerate kinase family. Monomer.

The protein resides in the cytoplasm. The catalysed reaction is (2R)-3-phosphoglycerate + ATP = (2R)-3-phospho-glyceroyl phosphate + ADP. It functions in the pathway carbohydrate degradation; glycolysis; pyruvate from D-glyceraldehyde 3-phosphate: step 2/5. The polypeptide is Phosphoglycerate kinase (Microcystis aeruginosa (strain NIES-843 / IAM M-2473)).